Consider the following 404-residue polypeptide: Sorting nexin-5 (404 aa).

Ala-2 is subject to N-acetylalanine. Residues 25–172 (LNVDPSLQID…HVFLEYDQDL (148 aa)) form the PX domain. A 1,2-diacyl-sn-glycero-3-phospho-(1D-myo-inositol-4,5-bisphosphate)-binding positions include 40–46 (SERDKVK), 99–105 (FDGPREK), and 113–116 (EGSM). The interval 169 to 261 (DQDLSVRRKN…HSLALEEPTV (93 aa)) is interaction with DOCK1. Positions 183–200 (FGGFFKSVVKSADEVLFT) are membrane-binding amphipathic helix. At Ser-193 the chain carries Phosphoserine. The region spanning 202 to 404 (VKEVDDFFEQ…QSCIDLFKNN (203 aa)) is the BAR domain. N6-acetyllysine is present on Lys-275.

It belongs to the sorting nexin family. Forms heterodimers with BAR domain-containing sorting nexins SNX1 and SNX2; does not homodimerize. The heterodimers are proposed to self-assemble into helical arrays on the membrane to stabilize and expand local membrane curvature underlying endosomal tubule formation. Thought to be a component of the originally described retromer complex (also called SNX-BAR retromer) which is a pentamer containing the heterotrimeric retromer cargo-selective complex (CSC), also described as vacuolar protein sorting subcomplex (VPS), and a heterodimeric membrane-deforming subcomplex formed between SNX1 or SNX2 and SNX5 or SNX6 (also called SNX-BAR subcomplex); the respective CSC and SNX-BAR subcomplexes associate with low affinity. Interacts with SNX1, SNX2, VPS26A, VPS29, VPS35, DCTN1, DOCK1, MIB1, PIP5K1C isoform 3. Interacts with HGS; increased by PIP5K1C isoform 3 kinase activity and by PtdIns(3P) and/or PtdIns(3,4)P2. In terms of assembly, (Microbial infection) Interacts with human cytomegalovirus proteins UL35 and UL35A; these interactions inhibit the ability of USP7 to form nuclear bodies.

Its subcellular location is the endosome. It is found in the early endosome. The protein resides in the early endosome membrane. The protein localises to the cell membrane. It localises to the cytoplasmic vesicle membrane. Its subcellular location is the cytoplasm. It is found in the cell projection. The protein resides in the phagocytic cup. The protein localises to the ruffle. Involved in several stages of intracellular trafficking. Interacts with membranes containing phosphatidylinositol 3-phosphate (PtdIns(3P)) or phosphatidylinositol 3,4-bisphosphate (PtdIns(3,4)P2). Acts in part as component of the retromer membrane-deforming SNX-BAR subcomplex. The SNX-BAR retromer mediates retrograde transport of cargo proteins from endosomes to the trans-Golgi network (TGN) and is involved in endosome-to-plasma membrane transport for cargo protein recycling. The SNX-BAR subcomplex functions to deform the donor membrane into a tubular profile called endosome-to-TGN transport carrier (ETC). Does not have in vitro vesicle-to-membrane remodeling activity. Involved in retrograde transport of lysosomal enzyme receptor IGF2R. May function as link between endosomal transport vesicles and dynactin. Plays a role in the internalization of EGFR after EGF stimulation. Involved in EGFR endosomal sorting and degradation; the function involves PIP5K1C isoform 3 and is retromer-independent. Together with PIP5K1C isoform 3 facilitates HGS interaction with ubiquitinated EGFR, which initiates EGFR sorting to intraluminal vesicles (ILVs) of the multivesicular body for subsequent lysosomal degradation. Involved in E-cadherin sorting and degradation; inhibits PIP5K1C isoform 3-mediated E-cadherin degradation. Plays a role in macropinocytosis. The chain is Sorting nexin-5 (SNX5) from Homo sapiens (Human).